A 296-amino-acid chain; its full sequence is MTDLQSIAPRDKAEILAQALPYIRKFHGKTIVIKYGGNAMTDPALQADFAEDVVLLKLVGMNPVVVHGGGPQIETALKRLGKQGHFIQGMRVTDAETMEVVEWVLAGEVQQDIVGLINQAGGKAVGLTGRDGGLIRARKLKMVDKDDPSKEHDIGQVGDIVSIDPSVVKALQDDAFIPVISPLGFGEENESYNINADVVASKLATVLKAEKLMMLTNIPGVLNKSGALIPELTAREIDELVVDGTISGGMLPKIAGAIDAAKSGVNAVHIVDGRVPHAMLLEILTEQAYGTMIRSH.

Residues 69–70, Arg91, and Asn193 each bind substrate; that span reads GG.

Belongs to the acetylglutamate kinase family. ArgB subfamily.

It is found in the cytoplasm. The catalysed reaction is N-acetyl-L-glutamate + ATP = N-acetyl-L-glutamyl 5-phosphate + ADP. Its pathway is amino-acid biosynthesis; L-arginine biosynthesis; N(2)-acetyl-L-ornithine from L-glutamate: step 2/4. Catalyzes the ATP-dependent phosphorylation of N-acetyl-L-glutamate. The protein is Acetylglutamate kinase of Paracidovorax citrulli (strain AAC00-1) (Acidovorax citrulli).